The sequence spans 479 residues: Deoxyribodipyrimidine photo-lyase (479 aa).

One can recognise a Photolyase/cryptochrome alpha/beta domain in the interval 6–132 (APVIVWFRKD…TVRSFSGQLL (127 aa)). Tyr-226 is an FAD binding site. Residue Arg-230 participates in DNA binding. Residues 238–242 (TSLLS) and 277–284 (EIVWREFC) each bind FAD. Interaction with DNA stretches follow at residues 277–284 (EIVWREFC) and 343–344 (NR). Position 374 to 376 (374 to 376 (DAD)) interacts with FAD. DNA is bound at residue Gln-406.

This sequence belongs to the DNA photolyase class-3 family. Requires FAD as cofactor. (6R)-5,10-methylene-5,6,7,8-tetrahydrofolate is required as a cofactor.

The enzyme catalyses cyclobutadipyrimidine (in DNA) = 2 pyrimidine residues (in DNA).. Functionally, photolyase involved in the repair of UV radiation-induced DNA damage. By using blue-light energy, catalyzes the photoreactivation of cyclobutane pyrimidine dimers (CPDs), which are formed between adjacent bases on the same DNA strand upon exposure to ultraviolet radiation. Can repair CPD lesions in ssDNA as well as in dsDNA. The polypeptide is Deoxyribodipyrimidine photo-lyase (Agrobacterium fabrum (strain C58 / ATCC 33970) (Agrobacterium tumefaciens (strain C58))).